We begin with the raw amino-acid sequence, 158 residues long: Cyclic pyranopterin monophosphate synthase (158 aa).

Substrate contacts are provided by residues 75–77 and 113–114; these read LCH and ME. Asp-128 is an active-site residue.

This sequence belongs to the MoaC family. In terms of assembly, homohexamer; trimer of dimers.

It catalyses the reaction (8S)-3',8-cyclo-7,8-dihydroguanosine 5'-triphosphate = cyclic pyranopterin phosphate + diphosphate. Its pathway is cofactor biosynthesis; molybdopterin biosynthesis. Catalyzes the conversion of (8S)-3',8-cyclo-7,8-dihydroguanosine 5'-triphosphate to cyclic pyranopterin monophosphate (cPMP). The chain is Cyclic pyranopterin monophosphate synthase from Ralstonia pickettii (strain 12J).